A 96-amino-acid chain; its full sequence is Neurotoxin beta-KTx 31.1 (96 aa).

Residues 1–21 (MQAKRTILLLLLLGMVALSSC) form the signal peptide. Positions 22-29 (GLREKHVQ) are excised as a propeptide. One can recognise a BetaSPN-type CS-alpha/beta domain in the interval 56 to 93 (QYGCPIIKDYCSFHCNDLEKHEGYCHGTKCKCNIPNQY). 3 disulfides stabilise this stretch: Cys-59–Cys-80, Cys-66–Cys-85, and Cys-70–Cys-87.

Belongs to the long chain scorpion toxin family. Class 1 subfamily. Expressed by the venom gland.

It localises to the secreted. In terms of biological role, inhibits voltage-gated potassium channel. In Lychas mucronatus (Chinese swimming scorpion), this protein is Neurotoxin beta-KTx 31.1.